The primary structure comprises 458 residues: tRNA modification GTPase MnmE (458 aa).

(6S)-5-formyl-5,6,7,8-tetrahydrofolate-binding residues include Arg22, Glu85, and Arg124. Residues 220–379 (GIKTVIVGRP…LEEHISELVF (160 aa)) form the TrmE-type G domain. Asn230 contributes to the K(+) binding site. Residues 230-235 (NVGKSS), 249-255 (TEIPGTT), and 274-277 (DTAG) each bind GTP. Mg(2+) is bound at residue Ser234. K(+) is bound by residues Thr249, Ile251, and Thr254. Thr255 serves as a coordination point for Mg(2+). Lys458 provides a ligand contact to (6S)-5-formyl-5,6,7,8-tetrahydrofolate.

It belongs to the TRAFAC class TrmE-Era-EngA-EngB-Septin-like GTPase superfamily. TrmE GTPase family. As to quaternary structure, homodimer. Heterotetramer of two MnmE and two MnmG subunits. Requires K(+) as cofactor.

Its subcellular location is the cytoplasm. In terms of biological role, exhibits a very high intrinsic GTPase hydrolysis rate. Involved in the addition of a carboxymethylaminomethyl (cmnm) group at the wobble position (U34) of certain tRNAs, forming tRNA-cmnm(5)s(2)U34. This chain is tRNA modification GTPase MnmE, found in Natranaerobius thermophilus (strain ATCC BAA-1301 / DSM 18059 / JW/NM-WN-LF).